The primary structure comprises 257 residues: Non-homologous end joining protein Ku (257 aa).

Residues 9–184 (TFGMVAIPIG…YTKPEVNEQE (176 aa)) enclose the Ku domain.

Belongs to the prokaryotic Ku family. In terms of assembly, homodimer. Interacts with LigD.

Functionally, with LigD forms a non-homologous end joining (NHEJ) DNA repair enzyme, which repairs dsDNA breaks with reduced fidelity. Binds linear dsDNA with 5'- and 3'- overhangs but not closed circular dsDNA nor ssDNA. Recruits and stimulates the ligase activity of LigD. In Lachnoclostridium phytofermentans (strain ATCC 700394 / DSM 18823 / ISDg) (Clostridium phytofermentans), this protein is Non-homologous end joining protein Ku.